Reading from the N-terminus, the 211-residue chain is ATP phosphoribosyltransferase (211 aa).

Belongs to the ATP phosphoribosyltransferase family. Short subfamily. As to quaternary structure, heteromultimer composed of HisG and HisZ subunits.

Its subcellular location is the cytoplasm. The enzyme catalyses 1-(5-phospho-beta-D-ribosyl)-ATP + diphosphate = 5-phospho-alpha-D-ribose 1-diphosphate + ATP. It functions in the pathway amino-acid biosynthesis; L-histidine biosynthesis; L-histidine from 5-phospho-alpha-D-ribose 1-diphosphate: step 1/9. Catalyzes the condensation of ATP and 5-phosphoribose 1-diphosphate to form N'-(5'-phosphoribosyl)-ATP (PR-ATP). Has a crucial role in the pathway because the rate of histidine biosynthesis seems to be controlled primarily by regulation of HisG enzymatic activity. The chain is ATP phosphoribosyltransferase from Clostridium botulinum (strain 657 / Type Ba4).